The following is a 73-amino-acid chain: uncharacterized protein (73 aa).

This is an uncharacterized protein from Autographa californica nuclear polyhedrosis virus (AcMNPV).